A 439-amino-acid polypeptide reads, in one-letter code: MSDNIYSVSQLNSAARQMLEGNFSQIWLTGEISNFTQPVSGHWYLTLKDENAQVRCAMFRMKNLRVAFRPQNGMQVLVRANVSLYEPRGDYQLIIDSMHPAGEGLLQQQFEALKMKLAAEGLFAQNLKKTLPHFSKAVGIITSSTGAALQDILHILARRDPSLKVVIYPTAVQGKEATAEIVQMIELANARQEVDVLIVGRGGGSLEDLWCFNEEEVARAIFRSTLPIISAVGHETDVTIADFVADLRAPTPSAAAELVSRNQDELLQQLRHQQQRLDMAFDRLFTRKSQRLKQLALRLQNQHPQNQLRAQQAKNEQLTHRLQLAILRQFENTQQKFTALSVRLKQNPLPYRIQRYQQGLEQLKVRLNFCVNRQVTERQNKLATLCGKLDGLSPLKVLARGYSIAENPQGKAIVSVKDVNQGDFITTQVADGKIVSKVL.

The protein belongs to the XseA family. In terms of assembly, heterooligomer composed of large and small subunits.

The protein resides in the cytoplasm. It carries out the reaction Exonucleolytic cleavage in either 5'- to 3'- or 3'- to 5'-direction to yield nucleoside 5'-phosphates.. Bidirectionally degrades single-stranded DNA into large acid-insoluble oligonucleotides, which are then degraded further into small acid-soluble oligonucleotides. This chain is Exodeoxyribonuclease 7 large subunit, found in Haemophilus influenzae (strain 86-028NP).